The sequence spans 445 residues: UPF0210 protein Sez_0396 (445 aa).

This sequence belongs to the UPF0210 family. In terms of assembly, homodimer.

The chain is UPF0210 protein Sez_0396 from Streptococcus equi subsp. zooepidemicus (strain MGCS10565).